The primary structure comprises 81 residues: Photosystem I iron-sulfur center (81 aa).

4Fe-4S ferredoxin-type domains follow at residues 2-31 and 39-68; these read SHSV…MVPW and IASA…VRVY. Residues cysteine 11, cysteine 14, cysteine 17, cysteine 21, cysteine 48, cysteine 51, cysteine 54, and cysteine 58 each contribute to the [4Fe-4S] cluster site.

As to quaternary structure, the eukaryotic PSI reaction center is composed of at least 11 subunits. [4Fe-4S] cluster serves as cofactor.

The protein resides in the plastid. It localises to the chloroplast thylakoid membrane. It catalyses the reaction reduced [plastocyanin] + hnu + oxidized [2Fe-2S]-[ferredoxin] = oxidized [plastocyanin] + reduced [2Fe-2S]-[ferredoxin]. Apoprotein for the two 4Fe-4S centers FA and FB of photosystem I (PSI); essential for photochemical activity. FB is the terminal electron acceptor of PSI, donating electrons to ferredoxin. The C-terminus interacts with PsaA/B/D and helps assemble the protein into the PSI complex. Required for binding of PsaD and PsaE to PSI. PSI is a plastocyanin/cytochrome c6-ferredoxin oxidoreductase, converting photonic excitation into a charge separation, which transfers an electron from the donor P700 chlorophyll pair to the spectroscopically characterized acceptors A0, A1, FX, FA and FB in turn. This chain is Photosystem I iron-sulfur center, found in Emiliania huxleyi (Coccolithophore).